Reading from the N-terminus, the 223-residue chain is MKVKIEESWKEVLNNEFNKEYFKKLVKFIKHEYKTKNGKIFPPPKLIFNAFNSLPFKDIKVVIIGQDPYHGKNQANGLAFSVDSKIKIPPSLQNIFKEIEKSLKIKTIPNGDLKRWAIQGVFLINTILTVEEGKPSSHKAIGWEIFTDEVIKIISKNLKNIVFMLWGNLARSKKGLIDPTKHLILETSHPSPYSANNGFLGSNHFSSALDYLKKHNKNIINFQ.

Catalysis depends on Asp67, which acts as the Proton acceptor.

Belongs to the uracil-DNA glycosylase (UDG) superfamily. UNG family.

It localises to the cytoplasm. The catalysed reaction is Hydrolyzes single-stranded DNA or mismatched double-stranded DNA and polynucleotides, releasing free uracil.. Its function is as follows. Excises uracil residues from the DNA which can arise as a result of misincorporation of dUMP residues by DNA polymerase or due to deamination of cytosine. The protein is Uracil-DNA glycosylase of Borreliella burgdorferi (strain ZS7) (Borrelia burgdorferi).